The chain runs to 113 residues: Hydrogenase maturation factor HypA (113 aa).

Histidine 2 contacts Ni(2+). Positions 73, 76, 89, and 92 each coordinate Zn(2+).

The protein belongs to the HypA/HybF family.

Its function is as follows. Involved in the maturation of [NiFe] hydrogenases. Required for nickel insertion into the metal center of the hydrogenase. In Cereibacter sphaeroides (Rhodobacter sphaeroides), this protein is Hydrogenase maturation factor HypA.